The following is a 475-amino-acid chain: Chromosomal replication initiator protein DnaA (475 aa).

A domain I, interacts with DnaA modulators region spans residues 1–73 (MSDTEQERWS…LSCWQAELPD (73 aa)). A domain II region spans residues 73-131 (DVHRIDLTVRSAMRCAAPVREAPATDARHPERSEGRNGVELKTVATAPASANHDALGGS). Positions 132 to 354 (PLDPRLTFQS…GAINRLLAHS (223 aa)) are domain III, AAA+ region. Gly-179, Gly-181, Lys-182, and Thr-183 together coordinate ATP. Residues 355 to 475 (KLNAQPVTLE…VELLKRQLQE (121 aa)) are domain IV, binds dsDNA.

The protein belongs to the DnaA family. As to quaternary structure, oligomerizes as a right-handed, spiral filament on DNA at oriC.

It localises to the cytoplasm. Plays an essential role in the initiation and regulation of chromosomal replication. ATP-DnaA binds to the origin of replication (oriC) to initiate formation of the DNA replication initiation complex once per cell cycle. Binds the DnaA box (a 9 base pair repeat at the origin) and separates the double-stranded (ds)DNA. Forms a right-handed helical filament on oriC DNA; dsDNA binds to the exterior of the filament while single-stranded (ss)DNA is stabiized in the filament's interior. The ATP-DnaA-oriC complex binds and stabilizes one strand of the AT-rich DNA unwinding element (DUE), permitting loading of DNA polymerase. After initiation quickly degrades to an ADP-DnaA complex that is not apt for DNA replication. Binds acidic phospholipids. The chain is Chromosomal replication initiator protein DnaA from Nitrobacter winogradskyi (strain ATCC 25391 / DSM 10237 / CIP 104748 / NCIMB 11846 / Nb-255).